The chain runs to 1411 residues: Early endosome antigen 1 (1411 aa).

The tract at residues 1–27 (MLRRILQRTPGRVGSQGSDLDSSATPI) is disordered. The segment covering 15 to 27 (SQGSDLDSSATPI) has biased composition (polar residues). The segment at 41–64 (FICPQCMKSLGSADELFKHYEAVH) adopts a C2H2-type zinc-finger fold. Residues Ser-52 and Ser-70 each carry the phosphoserine modification. Residues 74-1348 (GESNLALKRD…IKHTQALNRK (1275 aa)) adopt a coiled-coil conformation. The interval 473-501 (VTNSTELQHQLDKTKQQHQEQQALQQSTT) is disordered. The span at 481-490 (HQLDKTKQQH) shows a compositional bias: basic and acidic residues. Residues 1352 to 1410 (DNEVQNCMACGKGFSVTVRRHHCRQCGNIFCAECSAKNALTPSSKKPVRVCDACFNDLQ) form an FYVE-type zinc finger. 8 residues coordinate Zn(2+): Cys-1358, Cys-1361, Cys-1374, Cys-1377, Cys-1382, Cys-1385, Cys-1402, and Cys-1405.

In terms of assembly, homodimer. Binds STX6. Binds RAB5A, RAB5B, RAB5C and RAB22A that have been activated by GTP-binding. Interacts with RAB31. Interacts with ERBB2. Interacts with SAMD9 and SAMD9L. May interact with PLEKHF2.

It is found in the cytoplasm. The protein localises to the early endosome membrane. In terms of biological role, binds phospholipid vesicles containing phosphatidylinositol 3-phosphate and participates in endosomal trafficking. The chain is Early endosome antigen 1 (EEA1) from Homo sapiens (Human).